A 505-amino-acid chain; its full sequence is Apolipoprotein N-acyltransferase (505 aa).

6 consecutive transmembrane segments (helical) span residues 15-46 (AAFV…LLLL), 55-75 (ALIA…WVHV), 89-109 (LFLM…FGWL), 129-149 (LWLI…WLWL), 161-181 (FAPI…AGSL), and 192-212 (MACI…MQWV). The CN hydrolase domain occupies 225-471 (IQGNIEQGLK…TGVLKATVTP (247 aa)). Glu264 serves as the catalytic Proton acceptor. Residue Lys330 is part of the active site. Cys382 serves as the catalytic Nucleophile. Residues 479 to 499 (FLWGTTPLYLWVGLAAGFAFW) traverse the membrane as a helical segment.

It belongs to the CN hydrolase family. Apolipoprotein N-acyltransferase subfamily.

The protein localises to the cell inner membrane. The catalysed reaction is N-terminal S-1,2-diacyl-sn-glyceryl-L-cysteinyl-[lipoprotein] + a glycerophospholipid = N-acyl-S-1,2-diacyl-sn-glyceryl-L-cysteinyl-[lipoprotein] + a 2-acyl-sn-glycero-3-phospholipid + H(+). It participates in protein modification; lipoprotein biosynthesis (N-acyl transfer). Functionally, catalyzes the phospholipid dependent N-acylation of the N-terminal cysteine of apolipoprotein, the last step in lipoprotein maturation. This Vibrio cholerae serotype O1 (strain ATCC 39315 / El Tor Inaba N16961) protein is Apolipoprotein N-acyltransferase.